Consider the following 133-residue polypeptide: uncharacterized protein (133 aa).

This sequence to E.coli ydcQ.

This is an uncharacterized protein from Haemophilus phage HP1 (strain HP1c1) (Bacteriophage HP1).